Here is a 290-residue protein sequence, read N- to C-terminus: tRNA dimethylallyltransferase (290 aa).

11 to 18 (GPTASGKS) contributes to the ATP binding site. Substrate is bound at residue 13–18 (TASGKS). Interaction with substrate tRNA stretches follow at residues 36–39 (DSMQ) and 158–162 (QRIVR).

The protein belongs to the IPP transferase family. Monomer. Requires Mg(2+) as cofactor.

The enzyme catalyses adenosine(37) in tRNA + dimethylallyl diphosphate = N(6)-dimethylallyladenosine(37) in tRNA + diphosphate. Catalyzes the transfer of a dimethylallyl group onto the adenine at position 37 in tRNAs that read codons beginning with uridine, leading to the formation of N6-(dimethylallyl)adenosine (i(6)A). This chain is tRNA dimethylallyltransferase, found in Bartonella henselae (strain ATCC 49882 / DSM 28221 / CCUG 30454 / Houston 1) (Rochalimaea henselae).